A 638-amino-acid chain; its full sequence is MSTGVQTKAAPGAGQHADGPRLLADIGGTNARFALETSPGEIGSVKVYPCADYPGVAEVIKRYLKDTKIGRVNHAAIAIANPVDGDQVSMTNHDWSFSIEATRRALGFDTLLVVNDFTALAMALPGLTDAQRVQVGGGTRRPNSVIGLLGPGTGMGVSGLIPADDRWIALGSEGGHATFAPADEREDIVLQYARKKWSHVSFERVAAGPGIEVIYRALAGRDKKRVAANVDTIEIVKRAMEGEPLAAESVDVFCGILGTFAGNIAVTLGALGGIYIGGGVVPRLGELFARSSFRKRFEAKGRFEAYLQNVPTYVITAEYPAFLGVSAILAEQLSNRAGGSSSAVFERIRQMRDALTPAERRVADLALNHPRSIINDPIVDIARKADVSQPTVIRFCRSLGCQGLSDFKLKLATGLTGTIPVSHSQVHLGDTATDFGAKVLDNTVSAILQLREHLNFEHVERAIDLLNGARRIEFYGLGNSNIVAQDAHYKFFRFGIPTIAYGDLYMQAASAALLGKGDVIVAVSKSGRAPELLRVLDVAMQAGAKVIAITSSNTPLAKRATVALETDHIEIRESQLSMISRILHLVMIDILAVGVAIRRAVPSADVAETVAKARQGADDDATAVLDWLSHGAASSARD.

The tract at residues 1 to 20 (MSTGVQTKAAPGAGQHADGP) is disordered. The segment at 1–341 (MSTGVQTKAA…QLSNRAGGSS (341 aa)) is glucokinase. Residue 24–29 (ADIGGT) participates in ATP binding. The region spanning 342-418 (SAVFERIRQM…LKLATGLTGT (77 aa)) is the HTH rpiR-type domain. The putative HTH-type transcriptional regulator stretch occupies residues 342–638 (SAVFERIRQM…SHGAASSARD (297 aa)). The segment at residues 378-397 (IVDIARKADVSQPTVIRFCR) is a DNA-binding region (H-T-H motif). The SIS domain maps to 462 to 601 (AIDLLNGARR…AVGVAIRRAV (140 aa)).

It in the N-terminal section; belongs to the bacterial glucokinase family.

The protein resides in the cytoplasm. The catalysed reaction is D-glucose + ATP = D-glucose 6-phosphate + ADP + H(+). This Paraburkholderia xenovorans (strain LB400) protein is Bifunctional protein glk (glk).